The sequence spans 295 residues: Ribosomal protein L11 methyltransferase (295 aa).

Residues Thr-146, Gly-167, Asp-189, and Asn-231 each contribute to the S-adenosyl-L-methionine site.

The protein belongs to the methyltransferase superfamily. PrmA family.

It localises to the cytoplasm. The catalysed reaction is L-lysyl-[protein] + 3 S-adenosyl-L-methionine = N(6),N(6),N(6)-trimethyl-L-lysyl-[protein] + 3 S-adenosyl-L-homocysteine + 3 H(+). Functionally, methylates ribosomal protein L11. This chain is Ribosomal protein L11 methyltransferase, found in Vibrio cholerae serotype O1 (strain ATCC 39541 / Classical Ogawa 395 / O395).